The following is a 171-amino-acid chain: ATP synthase subunit b (171 aa).

Residues 14–34 (LGDMLFIGISFIVLMALISVV) traverse the membrane as a helical segment. Residues 56–97 (SAQKSRQEASDLADQRRDALSHSRAEASEIVADAKKSGEKQR) show a composition bias toward basic and acidic residues. The segment at 56 to 104 (SAQKSRQEASDLADQRRDALSHSRAEASEIVADAKKSGEKQRSSIVADA) is disordered.

Belongs to the ATPase B chain family. In terms of assembly, F-type ATPases have 2 components, F(1) - the catalytic core - and F(0) - the membrane proton channel. F(1) has five subunits: alpha(3), beta(3), gamma(1), delta(1), epsilon(1). F(0) has three main subunits: a(1), b(2) and c(10-14). The alpha and beta chains form an alternating ring which encloses part of the gamma chain. F(1) is attached to F(0) by a central stalk formed by the gamma and epsilon chains, while a peripheral stalk is formed by the delta and b chains.

The protein localises to the cell membrane. Functionally, f(1)F(0) ATP synthase produces ATP from ADP in the presence of a proton or sodium gradient. F-type ATPases consist of two structural domains, F(1) containing the extramembraneous catalytic core and F(0) containing the membrane proton channel, linked together by a central stalk and a peripheral stalk. During catalysis, ATP synthesis in the catalytic domain of F(1) is coupled via a rotary mechanism of the central stalk subunits to proton translocation. Its function is as follows. Component of the F(0) channel, it forms part of the peripheral stalk, linking F(1) to F(0). This is ATP synthase subunit b from Lactiplantibacillus plantarum (strain ATCC BAA-793 / NCIMB 8826 / WCFS1) (Lactobacillus plantarum).